A 286-amino-acid polypeptide reads, in one-letter code: Beta-lactamase SHV-46 (286 aa).

The first 21 residues, 1–21 (MRYIRLCIISLLATLPLAVHA), serve as a signal peptide directing secretion. Serine 66 acts as the Acyl-ester intermediate in catalysis. An intrachain disulfide couples cysteine 73 to cysteine 119. Glutamate 164 functions as the Proton acceptor in the catalytic mechanism. 230–232 (KTG) is a binding site for substrate.

This sequence belongs to the class-A beta-lactamase family.

The catalysed reaction is a beta-lactam + H2O = a substituted beta-amino acid. This chain is Beta-lactamase SHV-46 (bla), found in Klebsiella oxytoca.